The sequence spans 716 residues: Segment polarity protein dishevelled homolog DVL-3 (716 aa).

The DIX domain maps to 1 to 82 (MGETKIIYHL…RVVSWLVSAE (82 aa)). Position 27 is an omega-N-methylarginine (Arg-27). Phosphoserine is present on residues Ser-48 and Ser-125. Residues 85-235 (HPDPAPFCAD…VSRIERSSSF (151 aa)) are disordered. Over residues 142-156 (QRERPRRRDGPEHAT) the composition is skewed to basic and acidic residues. Positions 175-190 (SSSTLMSSELETTSFF) are enriched in low complexity. Ser-192 is subject to Phosphoserine. Residues 199–212 (SRFSSSTEQSSASR) show a composition bias toward low complexity. Position 212 is an omega-N-methylarginine (Arg-212). Over residues 213–226 (LMRRHKRRRRKQKV) the composition is skewed to basic residues. Residues 249-321 (TVTLNMEKYN…NDDAVRVLRE (73 aa)) form the PDZ domain. Arg-271 is modified (asymmetric dimethylarginine; by PRMT1; alternate). Symmetric dimethylarginine; by PRMT7; alternate occurs at positions 271 and 342. Arg-342 carries the omega-N-methylarginine; alternate modification. The residue at position 346 (Thr-346) is a Phosphothreonine. The 75-residue stretch at 422-496 (PESGLEVRDR…SEQCYYIFGD (75 aa)) folds into the DEP domain. A disordered region spans residues 546–691 (PYNPHPGFPE…PPGRDLASVP (146 aa)). A compositionally biased stretch (low complexity) spans 565 to 581 (ASSQHSEGSRSSGSNRS). 2 stretches are compositionally biased toward basic and acidic residues: residues 582-595 (GSDR…KAGD) and 604-622 (ESDH…RAPS). Arg-614 carries the post-translational modification Symmetric dimethylarginine; by PRMT7. Residues 653-682 (YGPPGVPPLYGPPMLMMPPPPAAMGPPGAP) show a composition bias toward pro residues. Ser-697 is subject to Phosphoserine. Arg-698 is subject to Omega-N-methylarginine; alternate. Dimethylated arginine; alternate is present on Arg-698. A Phosphoserine modification is found at Ser-700.

Belongs to the DSH family. In terms of assembly, interacts (via the PDZ domain) with the C-terminal regions of VANGL1 and VANGL2. Interacts (via the region containing both the PDZ and DEP domains) with LRRFIP2; the DIX domain may inhibit this interaction. Interacts with CYLD, CEP164 and DAB2. Interacts with DCDC2. Interacts with FOXK1 and FOXK2. Interacts with DAAM2. Ubiquitinated. Deubiquitinated by CYLD, which acts on 'Lys-63'-linked ubiquitin chains. In terms of processing, phosphorylated by CSNK1D. Post-translationally, arginine methylation may function as a switch in regulation of function in Wnt signaling.

It is found in the cytoplasm. Its function is as follows. Involved in the signal transduction pathway mediated by multiple Wnt genes. The sequence is that of Segment polarity protein dishevelled homolog DVL-3 (DVL3) from Homo sapiens (Human).